The chain runs to 441 residues: Maltokinase (441 aa).

This sequence belongs to the aminoglycoside phosphotransferase family. As to quaternary structure, monomer.

It carries out the reaction D-maltose + ATP = alpha-maltose 1-phosphate + ADP + H(+). It functions in the pathway glycan biosynthesis; glycogen biosynthesis. In terms of biological role, catalyzes the ATP-dependent phosphorylation of maltose to maltose 1-phosphate. Is involved in a branched alpha-glucan biosynthetic pathway from trehalose, together with TreS, GlgE and GlgB. The polypeptide is Maltokinase (mak) (Mycolicibacterium vanbaalenii (strain DSM 7251 / JCM 13017 / BCRC 16820 / KCTC 9966 / NRRL B-24157 / PYR-1) (Mycobacterium vanbaalenii)).